Reading from the N-terminus, the 131-residue chain is uncharacterized protein (131 aa).

4 helical membrane passes run 7–29 (LLKFLIQAFMWFAIASEFVSLLY), 49–69 (LVKVLNVIIIYELFTTLLIAL), 76–98 (LILIIDTAMIFFIRELLIVLFTY), and 102–124 (ELSEGIASALILGTLGILRFLYL).

It is found in the cell membrane. This is an uncharacterized protein from Aquifex aeolicus (strain VF5).